The sequence spans 396 residues: S-adenosylmethionine synthase (396 aa).

H16 contacts ATP. D18 contacts Mg(2+). E44 contacts K(+). Positions 57 and 100 each coordinate L-methionine. A flexible loop region spans residues 100–110; it reads QSPDIAQGVDR. ATP contacts are provided by residues 167 to 169, 233 to 234, D242, 248 to 249, A265, and K269; these read DAK, RF, and RK. D242 contacts L-methionine. K273 serves as a coordination point for L-methionine.

Belongs to the AdoMet synthase family. As to quaternary structure, homotetramer; dimer of dimers. Mg(2+) is required as a cofactor. K(+) serves as cofactor.

The protein resides in the cytoplasm. The catalysed reaction is L-methionine + ATP + H2O = S-adenosyl-L-methionine + phosphate + diphosphate. It participates in amino-acid biosynthesis; S-adenosyl-L-methionine biosynthesis; S-adenosyl-L-methionine from L-methionine: step 1/1. Catalyzes the formation of S-adenosylmethionine (AdoMet) from methionine and ATP. The overall synthetic reaction is composed of two sequential steps, AdoMet formation and the subsequent tripolyphosphate hydrolysis which occurs prior to release of AdoMet from the enzyme. The polypeptide is S-adenosylmethionine synthase (Paraburkholderia phytofirmans (strain DSM 17436 / LMG 22146 / PsJN) (Burkholderia phytofirmans)).